The sequence spans 332 residues: Fructose-1,6-bisphosphatase class 1 (332 aa).

Mg(2+) contacts are provided by Glu89, Asp110, Leu112, and Asp113. Substrate is bound by residues 113-116 (DGSS), Asn206, Tyr239, 257-259 (YLY), and Lys269. Glu275 is a Mg(2+) binding site.

It belongs to the FBPase class 1 family. As to quaternary structure, homotetramer. Mg(2+) serves as cofactor.

It is found in the cytoplasm. It catalyses the reaction beta-D-fructose 1,6-bisphosphate + H2O = beta-D-fructose 6-phosphate + phosphate. It functions in the pathway carbohydrate biosynthesis; gluconeogenesis. This chain is Fructose-1,6-bisphosphatase class 1, found in Cronobacter sakazakii (strain ATCC BAA-894) (Enterobacter sakazakii).